The primary structure comprises 306 residues: Ribosomal RNA small subunit methyltransferase H (306 aa).

S-adenosyl-L-methionine contacts are provided by residues Gly-36 to His-38, Asp-56, Phe-80, Asp-97, and Gln-104. Positions Ala-280–Ala-306 are disordered.

Belongs to the methyltransferase superfamily. RsmH family.

The protein localises to the cytoplasm. It catalyses the reaction cytidine(1402) in 16S rRNA + S-adenosyl-L-methionine = N(4)-methylcytidine(1402) in 16S rRNA + S-adenosyl-L-homocysteine + H(+). Functionally, specifically methylates the N4 position of cytidine in position 1402 (C1402) of 16S rRNA. The sequence is that of Ribosomal RNA small subunit methyltransferase H from Polaromonas naphthalenivorans (strain CJ2).